The sequence spans 709 residues: ATP-dependent zinc metalloprotease FtsH (709 aa).

Residues 1 to 25 (MKKNKGLNEATTSEKPQFPKRTAWK) are Cytoplasmic-facing. The helical transmembrane segment at 26–46 (IFWWVVILAIIIGILVYILMP) threads the bilayer. At 47–171 (RATTAVIEKW…FVAPDTRARD (125 aa)) the chain is on the extracellular side. A helical membrane pass occupies residues 172–192 (VLNIFFGLLPIIIFVIFFLLF). The Cytoplasmic portion of the chain corresponds to 193–709 (WRSARGISGG…DTEKDSETNS (517 aa)). ATP is bound at residue 268 to 275 (GPPGTGKT). H490 is a Zn(2+) binding site. E491 is an active-site residue. Positions 494 and 569 each coordinate Zn(2+). The segment at 673–709 (ILAQKQEQQAKQKAEAKEAKLNKKTEKDTEKDSETNS) is disordered. Residues 680 to 709 (QQAKQKAEAKEAKLNKKTEKDTEKDSETNS) show a composition bias toward basic and acidic residues.

This sequence in the central section; belongs to the AAA ATPase family. It in the C-terminal section; belongs to the peptidase M41 family. Homohexamer. The cofactor is Zn(2+).

It localises to the cell membrane. Acts as a processive, ATP-dependent zinc metallopeptidase for both cytoplasmic and membrane proteins. Plays a role in the quality control of integral membrane proteins. This is ATP-dependent zinc metalloprotease FtsH from Mycoplasma pneumoniae (strain ATCC 29342 / M129 / Subtype 1) (Mycoplasmoides pneumoniae).